Here is a 361-residue protein sequence, read N- to C-terminus: 3-dehydroquinate synthase (361 aa).

NAD(+)-binding positions include 107–111 (GVIGD), 131–132 (TS), Lys144, and Lys153. The Zn(2+) site is built by Glu186, His251, and His268.

The protein belongs to the sugar phosphate cyclases superfamily. Dehydroquinate synthase family. NAD(+) serves as cofactor. The cofactor is Co(2+). Requires Zn(2+) as cofactor.

The protein localises to the cytoplasm. The catalysed reaction is 7-phospho-2-dehydro-3-deoxy-D-arabino-heptonate = 3-dehydroquinate + phosphate. Its pathway is metabolic intermediate biosynthesis; chorismate biosynthesis; chorismate from D-erythrose 4-phosphate and phosphoenolpyruvate: step 2/7. Its function is as follows. Catalyzes the conversion of 3-deoxy-D-arabino-heptulosonate 7-phosphate (DAHP) to dehydroquinate (DHQ). This is 3-dehydroquinate synthase from Synechocystis sp. (strain ATCC 27184 / PCC 6803 / Kazusa).